A 320-amino-acid polypeptide reads, in one-letter code: Aspartate carbamoyltransferase catalytic subunit (320 aa).

Positions 53 and 54 each coordinate carbamoyl phosphate. Residue K82 participates in L-aspartate binding. Positions 103, 131, and 134 each coordinate carbamoyl phosphate. L-aspartate contacts are provided by R164 and R227. Carbamoyl phosphate-binding residues include L266 and P267.

It belongs to the aspartate/ornithine carbamoyltransferase superfamily. ATCase family. Heterododecamer (2C3:3R2) of six catalytic PyrB chains organized as two trimers (C3), and six regulatory PyrI chains organized as three dimers (R2).

It catalyses the reaction carbamoyl phosphate + L-aspartate = N-carbamoyl-L-aspartate + phosphate + H(+). It participates in pyrimidine metabolism; UMP biosynthesis via de novo pathway; (S)-dihydroorotate from bicarbonate: step 2/3. Functionally, catalyzes the condensation of carbamoyl phosphate and aspartate to form carbamoyl aspartate and inorganic phosphate, the committed step in the de novo pyrimidine nucleotide biosynthesis pathway. The protein is Aspartate carbamoyltransferase catalytic subunit of Bifidobacterium longum subsp. infantis (strain ATCC 15697 / DSM 20088 / JCM 1222 / NCTC 11817 / S12).